The following is a 394-amino-acid chain: GDNF family receptor alpha-like (394 aa).

Positions 1–18 (MIVFIFLAMGLSLENEYT) are cleaved as a signal peptide. Over 19-351 (SQTNNCTYLR…TGFHSPFNGE (333 aa)) the chain is Extracellular. N-linked (GlcNAc...) asparagine glycosylation is found at Asn23, Asn50, Asn62, Asn67, Asn103, and Asn116. Disulfide bonds link Cys131–Cys189, Cys138–Cys144, Cys155–Cys167, Cys162–Cys210, Cys191–Cys198, Cys220–Cys291, Cys227–Cys233, Cys244–Cys275, Cys252–Cys258, Cys269–Cys316, and Cys293–Cys304. A required for interaction with GDF15 region spans residues 149–228 (ASYLKACSAN…TCLSVIRSCQ (80 aa)). The chain crosses the membrane as a helical span at residues 352–371 (VIYAAMCMTVTCGILLLVMV). At 372–394 (KLRTSRISSKARDPSSIQIPGEL) the chain is on the cytoplasmic side.

The protein belongs to the GDNFR family. As to quaternary structure, interacts (via the extracellular domain) with GDF15 and RET; receptor of GDF15, mediates cellular signaling through interaction with RET after GDF15-binding. Interaction with RET requires previous GDF15-binding. Cleaved and inactivated by MMP14, inhibiting the GDF15-GFRAL aversive response. Expressed in the brainstem, restricted to cells in the area postrema and the immediately adjacent region of the nucleus tractus solitarius (at protein level). Detected at low levels in testis and adipose tissue.

The protein localises to the cell membrane. With respect to regulation, specifically inhibited by 3P10 monoclonal antibody. Strongly activated by LY3463251, a long-acting and stable agonist composed of GDF15 conjugated monomeric human IgG4 Fc. In terms of biological role, brainstem-restricted receptor for GDF15 hormone, which triggers an aversive response, characterized by nausea, vomiting, and/or loss of appetite in response to various stresses. The aversive response is both required to reduce continuing exposure to those stresses at the time of exposure and to promote avoidance behavior in the future. The GDF15-GFRAL aversive response is triggered by stresses, such as anticancer drugs (camptothecin or cisplatin), cancers or drugs such as metformin. Upon interaction with its ligand, GDF15, mediates the GDF15-induced autophosphorylation and activation of the RET tyrosine kinase receptor, leading to activation of MAPK- and AKT- signaling pathways. Ligand-binding activates GFRAL-expressing neurons localized in the area postrema and nucleus tractus solitarius of the brainstem. The GDF15-GFRAL signal induces expression of genes involved in metabolism, such as lipid metabolism in adipose tissues. This Homo sapiens (Human) protein is GDNF family receptor alpha-like.